The primary structure comprises 360 residues: Phospho-N-acetylmuramoyl-pentapeptide-transferase (360 aa).

The next 10 helical transmembrane spans lie at 25-45 (RGIL…PWMI), 73-93 (TMGG…WADL), 97-117 (YVWV…VDDY), 142-162 (VGAA…TLII), 168-188 (ASIP…VGSS), 199-219 (GLAI…CYLS), 236-256 (AGEL…FLWF), 263-283 (VFMG…IAVI), 288-308 (IVLF…VIQV), and 338-358 (VIVR…ATLK).

It belongs to the glycosyltransferase 4 family. MraY subfamily. The cofactor is Mg(2+).

It localises to the cell inner membrane. The catalysed reaction is UDP-N-acetyl-alpha-D-muramoyl-L-alanyl-gamma-D-glutamyl-meso-2,6-diaminopimeloyl-D-alanyl-D-alanine + di-trans,octa-cis-undecaprenyl phosphate = di-trans,octa-cis-undecaprenyl diphospho-N-acetyl-alpha-D-muramoyl-L-alanyl-D-glutamyl-meso-2,6-diaminopimeloyl-D-alanyl-D-alanine + UMP. Its pathway is cell wall biogenesis; peptidoglycan biosynthesis. Its function is as follows. Catalyzes the initial step of the lipid cycle reactions in the biosynthesis of the cell wall peptidoglycan: transfers peptidoglycan precursor phospho-MurNAc-pentapeptide from UDP-MurNAc-pentapeptide onto the lipid carrier undecaprenyl phosphate, yielding undecaprenyl-pyrophosphoryl-MurNAc-pentapeptide, known as lipid I. The protein is Phospho-N-acetylmuramoyl-pentapeptide-transferase of Pseudomonas fluorescens (strain SBW25).